Reading from the N-terminus, the 619-residue chain is Dihydroxy-acid dehydratase 1 (619 aa).

Aspartate 81 contacts Mg(2+). Cysteine 122 is a [2Fe-2S] cluster binding site. 2 residues coordinate Mg(2+): aspartate 123 and lysine 124. Lysine 124 is subject to N6-carboxylysine. Residue cysteine 198 coordinates [2Fe-2S] cluster. Glutamate 494 contacts Mg(2+). Residue serine 520 is the Proton acceptor of the active site.

Belongs to the IlvD/Edd family. Homodimer. The cofactor is [2Fe-2S] cluster. Mg(2+) is required as a cofactor.

It catalyses the reaction (2R)-2,3-dihydroxy-3-methylbutanoate = 3-methyl-2-oxobutanoate + H2O. It carries out the reaction (2R,3R)-2,3-dihydroxy-3-methylpentanoate = (S)-3-methyl-2-oxopentanoate + H2O. Its pathway is amino-acid biosynthesis; L-isoleucine biosynthesis; L-isoleucine from 2-oxobutanoate: step 3/4. It functions in the pathway amino-acid biosynthesis; L-valine biosynthesis; L-valine from pyruvate: step 3/4. Functionally, functions in the biosynthesis of branched-chain amino acids. Catalyzes the dehydration of (2R,3R)-2,3-dihydroxy-3-methylpentanoate (2,3-dihydroxy-3-methylvalerate) into 2-oxo-3-methylpentanoate (2-oxo-3-methylvalerate) and of (2R)-2,3-dihydroxy-3-methylbutanoate (2,3-dihydroxyisovalerate) into 2-oxo-3-methylbutanoate (2-oxoisovalerate), the penultimate precursor to L-isoleucine and L-valine, respectively. This chain is Dihydroxy-acid dehydratase 1, found in Bordetella bronchiseptica (strain ATCC BAA-588 / NCTC 13252 / RB50) (Alcaligenes bronchisepticus).